Here is a 184-residue protein sequence, read N- to C-terminus: Large ribosomal subunit protein uL5c (184 aa).

Belongs to the universal ribosomal protein uL5 family. Part of the 50S ribosomal subunit; contacts the 5S rRNA.

Its subcellular location is the plastid. It localises to the chloroplast. In terms of biological role, binds 5S rRNA, forms part of the central protuberance of the 50S subunit. The chain is Large ribosomal subunit protein uL5c (rpl5) from Nephroselmis olivacea (Green alga).